Consider the following 552-residue polypeptide: MTSLREFRKLCCDIYHASGYKEKSKLIRDFITDRDDKYLIIKLLLPGLDDRIYNMNDKQIIKLYSIIFKQSQEDMLQDLGYGYIGDTIRTFFKENTEIRPRDKSILTLEDVDSFLTTLSSVTKESHQIKLLTDIASVCTCNDLKCVVMLIDKDLKIKAGPRYVLNAISPNAYDVFRKSNNLKEIIENASKQNLDSISISVMTPINPMLAESCDSVNKAFKKFPSGMFAEVKYDGERVQVHKNNNEFAFFSRNMKPVLSHKVDYLKEYIPKAFKKATSIVLDSEIVLVDEHNVPLPFGSLGIHKKKEYKNSNMCLFVFDCLYFDGFDMTDIPLYERRSFLKDVMVEIPNRIVFSELTNISNESQLTDVLDDALTRKLEGLVLKDINGVYEPGKRRWLKIKRDYLNEGSMADSADLVVLGAYYGKGAKGGIMAVFLMGCYDDESGKWKTVTKCSGHDDNTLRVLQDQLTMVKINKDPKKIPEWLVVNKIYIPDFVVEDPKQSQIWEISGAEFTSSKSHTANGISIRFPRFTRIREDKTWKESTHLNDLVNLTKS.

Residue E229 participates in ATP binding. K231 acts as the N6-AMP-lysine intermediate in catalysis. Residues R236 and E283 each contribute to the ATP site. Residues E283 and E377 each coordinate Mg(2+). ATP-binding residues include K382 and K397.

The protein belongs to the ATP-dependent DNA ligase family. In terms of assembly, interacts with host TOP2A and TOP2B. Requires Mg(2+) as cofactor.

The protein resides in the host cytoplasm. The enzyme catalyses ATP + (deoxyribonucleotide)n-3'-hydroxyl + 5'-phospho-(deoxyribonucleotide)m = (deoxyribonucleotide)n+m + AMP + diphosphate.. In terms of biological role, DNA ligase that seals nicks in double-stranded DNA during DNA replication, DNA recombination and DNA repair. Recruits cellular topoisomerase II to sites of viral replication and assembly. Contributes to the repair of the viral genome following UV irradiation. The sequence is that of DNA ligase (OPG180) from Vaccinia virus (strain Western Reserve) (VACV).